Here is a 341-residue protein sequence, read N- to C-terminus: Phosphoribosylformylglycinamidine cyclo-ligase (341 aa).

This sequence belongs to the AIR synthase family.

It is found in the cytoplasm. It catalyses the reaction 2-formamido-N(1)-(5-O-phospho-beta-D-ribosyl)acetamidine + ATP = 5-amino-1-(5-phospho-beta-D-ribosyl)imidazole + ADP + phosphate + H(+). Its pathway is purine metabolism; IMP biosynthesis via de novo pathway; 5-amino-1-(5-phospho-D-ribosyl)imidazole from N(2)-formyl-N(1)-(5-phospho-D-ribosyl)glycinamide: step 2/2. The polypeptide is Phosphoribosylformylglycinamidine cyclo-ligase (Agathobacter rectalis (strain ATCC 33656 / DSM 3377 / JCM 17463 / KCTC 5835 / VPI 0990) (Eubacterium rectale)).